The primary structure comprises 101 residues: NAD(P)H-quinone oxidoreductase subunit 4L, chloroplastic (101 aa).

Helical transmembrane passes span 2 to 22 (ILEHVLVLSAYLFLIGLYGLI), 32 to 52 (MCLELILNAVNMNLVTFSDFF), and 61 to 81 (IFCIFVIAIAAAEAAIGLAIV).

Belongs to the complex I subunit 4L family. As to quaternary structure, NDH is composed of at least 16 different subunits, 5 of which are encoded in the nucleus.

Its subcellular location is the plastid. The protein resides in the chloroplast thylakoid membrane. It catalyses the reaction a plastoquinone + NADH + (n+1) H(+)(in) = a plastoquinol + NAD(+) + n H(+)(out). The catalysed reaction is a plastoquinone + NADPH + (n+1) H(+)(in) = a plastoquinol + NADP(+) + n H(+)(out). Functionally, NDH shuttles electrons from NAD(P)H:plastoquinone, via FMN and iron-sulfur (Fe-S) centers, to quinones in the photosynthetic chain and possibly in a chloroplast respiratory chain. The immediate electron acceptor for the enzyme in this species is believed to be plastoquinone. Couples the redox reaction to proton translocation, and thus conserves the redox energy in a proton gradient. The sequence is that of NAD(P)H-quinone oxidoreductase subunit 4L, chloroplastic from Draba nemorosa (Woodland whitlowgrass).